The primary structure comprises 316 residues: Lipoyl synthase (316 aa).

Residues Cys66, Cys71, Cys77, Cys92, Cys96, Cys99, and Ser306 each contribute to the [4Fe-4S] cluster site. The Radical SAM core domain maps to 78-295; sequence YSQQTATFMV…ADIAKSMGFK (218 aa).

Belongs to the radical SAM superfamily. Lipoyl synthase family. The cofactor is [4Fe-4S] cluster.

Its subcellular location is the cytoplasm. It carries out the reaction [[Fe-S] cluster scaffold protein carrying a second [4Fe-4S](2+) cluster] + N(6)-octanoyl-L-lysyl-[protein] + 2 oxidized [2Fe-2S]-[ferredoxin] + 2 S-adenosyl-L-methionine + 4 H(+) = [[Fe-S] cluster scaffold protein] + N(6)-[(R)-dihydrolipoyl]-L-lysyl-[protein] + 4 Fe(3+) + 2 hydrogen sulfide + 2 5'-deoxyadenosine + 2 L-methionine + 2 reduced [2Fe-2S]-[ferredoxin]. It functions in the pathway protein modification; protein lipoylation via endogenous pathway; protein N(6)-(lipoyl)lysine from octanoyl-[acyl-carrier-protein]: step 2/2. Its function is as follows. Catalyzes the radical-mediated insertion of two sulfur atoms into the C-6 and C-8 positions of the octanoyl moiety bound to the lipoyl domains of lipoate-dependent enzymes, thereby converting the octanoylated domains into lipoylated derivatives. The sequence is that of Lipoyl synthase from Rhodopirellula baltica (strain DSM 10527 / NCIMB 13988 / SH1).